The sequence spans 164 residues: Small ribosomal subunit protein uS5 (164 aa).

Residues 10–73 (LEERVVAVNR…DDAKKNLIEV (64 aa)) form the S5 DRBM domain.

This sequence belongs to the universal ribosomal protein uS5 family. As to quaternary structure, part of the 30S ribosomal subunit. Contacts proteins S4 and S8.

In terms of biological role, with S4 and S12 plays an important role in translational accuracy. Functionally, located at the back of the 30S subunit body where it stabilizes the conformation of the head with respect to the body. In Streptococcus pneumoniae serotype 2 (strain D39 / NCTC 7466), this protein is Small ribosomal subunit protein uS5.